The primary structure comprises 35 residues: Potassium channel toxin alpha-KTx 6.15 (35 aa).

Cystine bridges form between C3/C24, C9/C29, C13/C31, and C19/C34.

Belongs to the short scorpion toxin superfamily. Potassium channel inhibitor family. Alpha-KTx 06 subfamily. In terms of tissue distribution, expressed by the venom gland.

Its subcellular location is the secreted. Functionally, blocks voltage-gated potassium channels rKv1.1/KCNA1 (IC(50)=13 nM), rKv1.2/KCNA2 (IC(50)=16 nM) and rKv1.3/KCNA3 (IC(50)=2 nM). This is Potassium channel toxin alpha-KTx 6.15 from Hemiscorpius lepturus (Scorpion).